Here is a 253-residue protein sequence, read N- to C-terminus: Imidazole glycerol phosphate synthase subunit HisF (253 aa).

Active-site residues include aspartate 11 and aspartate 130.

It belongs to the HisA/HisF family. As to quaternary structure, heterodimer of HisH and HisF.

It is found in the cytoplasm. It catalyses the reaction 5-[(5-phospho-1-deoxy-D-ribulos-1-ylimino)methylamino]-1-(5-phospho-beta-D-ribosyl)imidazole-4-carboxamide + L-glutamine = D-erythro-1-(imidazol-4-yl)glycerol 3-phosphate + 5-amino-1-(5-phospho-beta-D-ribosyl)imidazole-4-carboxamide + L-glutamate + H(+). Its pathway is amino-acid biosynthesis; L-histidine biosynthesis; L-histidine from 5-phospho-alpha-D-ribose 1-diphosphate: step 5/9. Its function is as follows. IGPS catalyzes the conversion of PRFAR and glutamine to IGP, AICAR and glutamate. The HisF subunit catalyzes the cyclization activity that produces IGP and AICAR from PRFAR using the ammonia provided by the HisH subunit. This Gluconobacter oxydans (strain 621H) (Gluconobacter suboxydans) protein is Imidazole glycerol phosphate synthase subunit HisF.